The following is a 248-amino-acid chain: Probable transcriptional regulatory protein BT_2363 (248 aa).

The protein belongs to the TACO1 family.

Its subcellular location is the cytoplasm. The protein is Probable transcriptional regulatory protein BT_2363 of Bartonella tribocorum (strain CIP 105476 / IBS 506).